We begin with the raw amino-acid sequence, 1578 residues long: DNA-directed RNA polymerase subunit beta' (1578 aa).

Zn(2+) is bound by residues Cys-101, Cys-103, Cys-115, and Cys-118. 3 residues coordinate Mg(2+): Asp-1286, Asp-1288, and Asp-1290.

It belongs to the RNA polymerase beta' chain family. RpoC1 subfamily. As to quaternary structure, in plastids the minimal PEP RNA polymerase catalytic core is composed of four subunits: alpha, beta, beta', and beta''. When a (nuclear-encoded) sigma factor is associated with the core the holoenzyme is formed, which can initiate transcription. Mg(2+) serves as cofactor. The cofactor is Zn(2+).

Its subcellular location is the plastid. The protein localises to the chloroplast. The catalysed reaction is RNA(n) + a ribonucleoside 5'-triphosphate = RNA(n+1) + diphosphate. DNA-dependent RNA polymerase catalyzes the transcription of DNA into RNA using the four ribonucleoside triphosphates as substrates. This chain is DNA-directed RNA polymerase subunit beta', found in Tupiella akineta (Green alga).